Consider the following 420-residue polypeptide: L-cysteine:1D-myo-inositol 2-amino-2-deoxy-alpha-D-glucopyranoside ligase (420 aa).

Cysteine 46 is a binding site for Zn(2+). Residues 46–49, threonine 61, and 84–86 each bind L-cysteinyl-5'-AMP; these read CGIT and NVT. Residues 48–58 carry the 'HIGH' region motif; sequence ITPYDSTHLGH. Positions 194-199 match the 'ERGGDP' region motif; the sequence is ERGGDP. Residue tryptophan 235 participates in L-cysteinyl-5'-AMP binding. A Zn(2+)-binding site is contributed by cysteine 239. 257–259 contributes to the L-cysteinyl-5'-AMP binding site; that stretch reads GTD. Histidine 264 is a Zn(2+) binding site. Valine 291 serves as a coordination point for L-cysteinyl-5'-AMP. A 'KMSKS' region motif is present at residues 297 to 301; the sequence is KMSKS.

The protein belongs to the class-I aminoacyl-tRNA synthetase family. MshC subfamily. Monomer. Requires Zn(2+) as cofactor.

It carries out the reaction 1D-myo-inositol 2-amino-2-deoxy-alpha-D-glucopyranoside + L-cysteine + ATP = 1D-myo-inositol 2-(L-cysteinylamino)-2-deoxy-alpha-D-glucopyranoside + AMP + diphosphate + H(+). Functionally, catalyzes the ATP-dependent condensation of GlcN-Ins and L-cysteine to form L-Cys-GlcN-Ins. The protein is L-cysteine:1D-myo-inositol 2-amino-2-deoxy-alpha-D-glucopyranoside ligase of Beutenbergia cavernae (strain ATCC BAA-8 / DSM 12333 / CCUG 43141 / JCM 11478 / NBRC 16432 / NCIMB 13614 / HKI 0122).